The primary structure comprises 311 residues: Pseudouridine-5'-phosphate glycosidase (311 aa).

The Proton donor role is filled by E32. Residues K96 and V116 each contribute to the substrate site. D148 is a Mn(2+) binding site. 150–152 (SAD) lines the substrate pocket. K169 acts as the Nucleophile in catalysis.

It belongs to the pseudouridine-5'-phosphate glycosidase family. Homotrimer. It depends on Mn(2+) as a cofactor.

The enzyme catalyses D-ribose 5-phosphate + uracil = psi-UMP + H2O. Functionally, catalyzes the reversible cleavage of pseudouridine 5'-phosphate (PsiMP) to ribose 5-phosphate and uracil. Functions biologically in the cleavage direction, as part of a pseudouridine degradation pathway. The chain is Pseudouridine-5'-phosphate glycosidase from Roseiflexus sp. (strain RS-1).